Reading from the N-terminus, the 963-residue chain is Protocadherin alpha-C1 (963 aa).

The signal sequence occupies residues 1 to 18 (MVGWGVAVLCLWVSCGAA). 5 Cadherin domains span residues 19 to 124 (AGQL…SPLF), 125 to 233 (PAGD…APVF), 234 to 340 (ERSV…APEL), 349 to 445 (VPED…TPSF), and 446 to 555 (PQPQ…YPVI). The Extracellular segment spans residues 19–683 (AGQLEYSVPE…GGQLSAQNLY (665 aa)). Asn38 carries N-linked (GlcNAc...) asparagine glycosylation. N-linked (GlcNAc...) asparagine glycans are attached at residues Asn248 and Asn274. An N-linked (GlcNAc...) asparagine glycan is attached at Asn562. Residues 570–667 (VPRSARTGHL…NSVPQLLPDF (98 aa)) enclose the Cadherin 6 domain. Residues 684–704 (LVIALACISFLFLGCLLFFVC) traverse the membrane as a helical segment. Residues 705–963 (TKLHQSPGCC…GNSTTDNSDQ (259 aa)) are Cytoplasmic-facing. PXXP repeat units follow at residues 812-815 (PRQP), 845-848 (PGGP), 886-889 (PGNP), and 904-907 (PGSP). Residues 812-907 (PRQPNPDWRY…PDKFIIPGSP (96 aa)) form a 4 X 4 AA repeats of P-X-X-P region. Positions 844–902 (GPGGPDQQWPTVSSATPEPEAGEVSPPVGAGVNSNSWTFKYGPGNPKQSGPGELPDKFI) are disordered. Positions 914 to 963 (QEPANSQIDKSDFITFGKKEETKKKKKKKKGNKTQEKKEKGNSTTDNSDQ) are disordered. The span at 922–936 (DKSDFITFGKKEETK) shows a compositional bias: basic and acidic residues.

The protein resides in the cell membrane. Functionally, potential calcium-dependent cell-adhesion protein. May be involved in the establishment and maintenance of specific neuronal connections in the brain. The protein is Protocadherin alpha-C1 (PCDHAC1) of Pan troglodytes (Chimpanzee).